The sequence spans 325 residues: MKNPKMTVIGGGTGISIILKSLRNEAVDITAVVTVADDGGSSGELRNAMQLAPPGDLRNVLLAMSDMPKFYERVFQYRFNESDGALAGHPLGNLIIAGISEMQGSTYNAIQILTKFFHITGKIYPSSEQALTLHAVFKDGHEVAGESSIAKYPGMIDHVYVTNTYNDQKPQASRKVVEAILESDMIVLGPGSLFTSILPNLVIPEIKEALRQTKAEVVYICNIMTQYGETEQFSDADHVAVLNQHLGRDLIDTVLVNVAKVPQAYMNSNKFDEYLVQVDHDFAGLCRAAKRVISSYFLRLENGGAFHDGNLVVEELMNLVRIVKQ.

It belongs to the gluconeogenesis factor family.

The protein localises to the cytoplasm. In terms of biological role, required for morphogenesis under gluconeogenic growth conditions. The protein is Putative gluconeogenesis factor of Streptococcus pyogenes serotype M1.